The sequence spans 130 residues: Small ribosomal subunit protein uS9 (130 aa).

Belongs to the universal ribosomal protein uS9 family.

The chain is Small ribosomal subunit protein uS9 from Streptococcus equi subsp. equi (strain 4047).